The following is a 336-amino-acid chain: Holliday junction branch migration complex subunit RuvB (336 aa).

Residues 1-183 (MATERLVAGN…FGINSRLEFY (183 aa)) form a large ATPase domain (RuvB-L) region. Residues Leu-22, Arg-23, Gly-64, Lys-67, Thr-68, Thr-69, 130-132 (EDF), Arg-173, Tyr-183, and Arg-220 each bind ATP. Thr-68 lines the Mg(2+) pocket. The tract at residues 184–254 (QVAELEEIIR…VAREALELLQ (71 aa)) is small ATPAse domain (RuvB-S). The interval 257–336 (AAGLDSSDRR…LGIKPEDRLF (80 aa)) is head domain (RuvB-H). DNA contacts are provided by Arg-312 and Arg-317.

Belongs to the RuvB family. Homohexamer. Forms an RuvA(8)-RuvB(12)-Holliday junction (HJ) complex. HJ DNA is sandwiched between 2 RuvA tetramers; dsDNA enters through RuvA and exits via RuvB. An RuvB hexamer assembles on each DNA strand where it exits the tetramer. Each RuvB hexamer is contacted by two RuvA subunits (via domain III) on 2 adjacent RuvB subunits; this complex drives branch migration. In the full resolvosome a probable DNA-RuvA(4)-RuvB(12)-RuvC(2) complex forms which resolves the HJ.

Its subcellular location is the cytoplasm. It carries out the reaction ATP + H2O = ADP + phosphate + H(+). Functionally, the RuvA-RuvB-RuvC complex processes Holliday junction (HJ) DNA during genetic recombination and DNA repair, while the RuvA-RuvB complex plays an important role in the rescue of blocked DNA replication forks via replication fork reversal (RFR). RuvA specifically binds to HJ cruciform DNA, conferring on it an open structure. The RuvB hexamer acts as an ATP-dependent pump, pulling dsDNA into and through the RuvAB complex. RuvB forms 2 homohexamers on either side of HJ DNA bound by 1 or 2 RuvA tetramers; 4 subunits per hexamer contact DNA at a time. Coordinated motions by a converter formed by DNA-disengaged RuvB subunits stimulates ATP hydrolysis and nucleotide exchange. Immobilization of the converter enables RuvB to convert the ATP-contained energy into a lever motion, pulling 2 nucleotides of DNA out of the RuvA tetramer per ATP hydrolyzed, thus driving DNA branch migration. The RuvB motors rotate together with the DNA substrate, which together with the progressing nucleotide cycle form the mechanistic basis for DNA recombination by continuous HJ branch migration. Branch migration allows RuvC to scan DNA until it finds its consensus sequence, where it cleaves and resolves cruciform DNA. The chain is Holliday junction branch migration complex subunit RuvB from Moorella thermoacetica (strain ATCC 39073 / JCM 9320).